We begin with the raw amino-acid sequence, 65 residues long: U12-theraphotoxin-Cg1a (65 aa).

An N-terminal signal peptide occupies residues 1 to 21; that stretch reads MKTSVLLFMLGLTFLFDGLAA. A propeptide spanning residues 22 to 29 is cleaved from the precursor; the sequence is INLQEGER. Intrachain disulfides connect C31–C45, C38–C50, and C44–C57.

Belongs to the neurotoxin 10 (Hwtx-1) family. 31 (Jztx-15) subfamily. In terms of tissue distribution, expressed by the venom gland.

The protein localises to the secreted. Probable ion channel inhibitor. The protein is U12-theraphotoxin-Cg1a of Chilobrachys guangxiensis (Chinese earth tiger tarantula).